The chain runs to 140 residues: Pro-Viral epidermal growth factor (140 aa).

The first 18 residues, 1 to 18 (MSMKYLMLLFAAMIIRSF), serve as a signal peptide directing secretion. The Extracellular portion of the chain corresponds to 19–100 (ADSGNAIETT…SENPNTTTSY (82 aa)). Residue asparagine 34 is glycosylated (N-linked (GlcNAc...) asparagine; by host). The region spanning 41–81 (AIRLCGPEGDGYCLHGDCIHARDIDGMYCRCSHGYTGIRCQ) is the EGF-like domain. 3 disulfide bridges follow: cysteine 45–cysteine 58, cysteine 53–cysteine 69, and cysteine 71–cysteine 80. Asparagine 95 is a glycosylation site (N-linked (GlcNAc...) asparagine; by host). A helical transmembrane segment spans residues 101–121 (IPSPGIMLVLVGIIIITCCLL). Residues 122 to 140 (SVYRFTRRTKLPIQDMVVP) lie on the Cytoplasmic side of the membrane.

The protein belongs to the orthopoxvirus OPG019 family. Viral epidermal growth factor interacts with host EGFR and promotes EGFR dimerization. In terms of processing, cleaved at the cell surface by host ADAM10, thereby releasing the secreted form of VGF.

Its subcellular location is the host membrane. It is found in the secreted. Stimulates cellular proliferation (hyperplasia)and mobility around infected cells to promote rapid and efficient spread of infection. This effect is beneficial for virus replication in vivo, because poxviruses replicate possibly better in proliferating cells than in quiescent cells. Acts by binding host EGFR, inducing its dimerization, autophosphorylation and leading to activation of several cellular pathways regulating cell proliferation or cell survival. The activation by host EGFR of mitogen activated protein kinases (MAPK) and extracellular-signal regulated kinases (ERK) are essential for the positive effect of vaccinia growth factor on poxvirus virulence in vivo. This is Pro-Viral epidermal growth factor (OPG019) from Bos taurus (Bovine).